Here is a 242-residue protein sequence, read N- to C-terminus: Glutathione S-transferase 3 (242 aa).

The 79-residue stretch at 1–79 (MIVLHHLKNS…HLVRKYGPSF (79 aa)) folds into the GST N-terminal domain. Residues 85 to 234 (DVAELEKYEL…ERYSHPPTPP (150 aa)) enclose the GST C-terminal domain. Position 228 is a phosphoserine (serine 228). Threonine 232 carries the post-translational modification Phosphothreonine.

Belongs to the GST superfamily. In terms of assembly, interacts with sad1.

The protein localises to the cytoplasm. The enzyme catalyses RX + glutathione = an S-substituted glutathione + a halide anion + H(+). Its function is as follows. May have a role in the detoxification of various heavy metals. This chain is Glutathione S-transferase 3 (gst3), found in Schizosaccharomyces pombe (strain 972 / ATCC 24843) (Fission yeast).